The sequence spans 144 residues: Peroxisome assembly protein 22 (144 aa).

Residues 13–35 (YGAVSLASLLVAASIVAYRWWNA) form a helical membrane-spanning segment.

The protein belongs to the peroxin-22 family.

The protein resides in the peroxisome membrane. Involved in peroxisome biogenesis. The sequence is that of Peroxisome assembly protein 22 (PEX22) from Eremothecium gossypii (strain ATCC 10895 / CBS 109.51 / FGSC 9923 / NRRL Y-1056) (Yeast).